A 504-amino-acid chain; its full sequence is Trifunctional (S)-stylopine synthase/(S)-nandinine synthase/(S)-canadine synthase (504 aa).

The chain crosses the membrane as a helical span at residues 16–36; it reads SSTTTTTTILLSLLFTIFIIL. Residue C448 coordinates heme.

Belongs to the cytochrome P450 family. It depends on heme as a cofactor. As to expression, expressed in roots and at lower levels in stems, leaves and plantlets.

The protein resides in the endoplasmic reticulum membrane. The enzyme catalyses (S)-cheilanthifoline + reduced [NADPH--hemoprotein reductase] + O2 = (S)-stylopine + oxidized [NADPH--hemoprotein reductase] + 2 H2O + H(+). It carries out the reaction (S)-tetrahydrocolumbamine + reduced [NADPH--hemoprotein reductase] + O2 = (S)-canadine + oxidized [NADPH--hemoprotein reductase] + 2 H2O + H(+). It catalyses the reaction (S)-scoulerine + reduced [NADPH--hemoprotein reductase] + O2 = (S)-nandinine + oxidized [NADPH--hemoprotein reductase] + 2 H2O + H(+). Its function is as follows. Methylenedioxy bridge-forming cytochrome P450 involved in the biosynthesis of isoquinoline alkaloids. Converts (S)-cheilanthifoline to (S)-stylopine, (S)-scoulerine to (S)-nandinine and (S)-tetrahydrocolumbamine to (S)-canadine. Can be involved in both sanguinarine and berberine biosynthesis. Catalyzes an oxidative reaction that does not incorporate oxygen into the product. In Argemone mexicana (Mexican prickly poppy), this protein is Trifunctional (S)-stylopine synthase/(S)-nandinine synthase/(S)-canadine synthase.